The sequence spans 673 residues: DNA ligase (673 aa).

Residues 32-36 (DHVYD), 81-82 (SL), and Glu-111 contribute to the NAD(+) site. Residue Lys-113 is the N6-AMP-lysine intermediate of the active site. NAD(+) contacts are provided by Arg-134, Glu-171, Lys-286, and Lys-310. Cys-404, Cys-407, Cys-422, and Cys-428 together coordinate Zn(2+). The 79-residue stretch at 595–673 (NIIDEYKNKT…NEFWKKDNNF (79 aa)) folds into the BRCT domain.

This sequence belongs to the NAD-dependent DNA ligase family. LigA subfamily. Mg(2+) serves as cofactor. Requires Mn(2+) as cofactor.

It catalyses the reaction NAD(+) + (deoxyribonucleotide)n-3'-hydroxyl + 5'-phospho-(deoxyribonucleotide)m = (deoxyribonucleotide)n+m + AMP + beta-nicotinamide D-nucleotide.. DNA ligase that catalyzes the formation of phosphodiester linkages between 5'-phosphoryl and 3'-hydroxyl groups in double-stranded DNA using NAD as a coenzyme and as the energy source for the reaction. It is essential for DNA replication and repair of damaged DNA. In Ureaplasma parvum serovar 3 (strain ATCC 27815 / 27 / NCTC 11736), this protein is DNA ligase.